Reading from the N-terminus, the 473-residue chain is Photosystem II CP43 reaction center protein (473 aa).

The propeptide occupies 1-14 (MKTLYSLRRFYPVE). The residue at position 15 (Thr-15) is an N-acetylthreonine. Thr-15 is modified (phosphothreonine). 5 helical membrane-spanning segments follow: residues 69 to 93 (LFEV…PHLA), 134 to 155 (LLGP…KDRN), 178 to 200 (KALY…RKIT), 255 to 275 (KPFA…LSYS), and 291 to 312 (WFNN…ASQA). Position 367 (Glu-367) interacts with [CaMn4O5] cluster. Residues 447–471 (RARAAAAGFEKGIDRDFEPVLSMTP) form a helical membrane-spanning segment.

The protein belongs to the PsbB/PsbC family. PsbC subfamily. As to quaternary structure, PSII is composed of 1 copy each of membrane proteins PsbA, PsbB, PsbC, PsbD, PsbE, PsbF, PsbH, PsbI, PsbJ, PsbK, PsbL, PsbM, PsbT, PsbX, PsbY, PsbZ, Psb30/Ycf12, at least 3 peripheral proteins of the oxygen-evolving complex and a large number of cofactors. It forms dimeric complexes. Binds multiple chlorophylls and provides some of the ligands for the Ca-4Mn-5O cluster of the oxygen-evolving complex. It may also provide a ligand for a Cl- that is required for oxygen evolution. PSII binds additional chlorophylls, carotenoids and specific lipids. is required as a cofactor.

It is found in the plastid. Its subcellular location is the chloroplast thylakoid membrane. Functionally, one of the components of the core complex of photosystem II (PSII). It binds chlorophyll and helps catalyze the primary light-induced photochemical processes of PSII. PSII is a light-driven water:plastoquinone oxidoreductase, using light energy to abstract electrons from H(2)O, generating O(2) and a proton gradient subsequently used for ATP formation. The polypeptide is Photosystem II CP43 reaction center protein (Daucus carota (Wild carrot)).